Consider the following 477-residue polypeptide: Cobyric acid synthase (477 aa).

The GATase cobBQ-type domain maps to Gly-248–Phe-432. Cys-330 functions as the Nucleophile in the catalytic mechanism. His-424 is a catalytic residue.

Belongs to the CobB/CobQ family. CobQ subfamily.

It participates in cofactor biosynthesis; adenosylcobalamin biosynthesis. In terms of biological role, catalyzes amidations at positions B, D, E, and G on adenosylcobyrinic A,C-diamide. NH(2) groups are provided by glutamine, and one molecule of ATP is hydrogenolyzed for each amidation. This chain is Cobyric acid synthase, found in Paracoccus denitrificans (strain Pd 1222).